Here is a 107-residue protein sequence, read N- to C-terminus: UPF0102 protein CTN_0433 (107 aa).

This sequence belongs to the UPF0102 family.

In Thermotoga neapolitana (strain ATCC 49049 / DSM 4359 / NBRC 107923 / NS-E), this protein is UPF0102 protein CTN_0433.